Reading from the N-terminus, the 419-residue chain is UDP-N-acetylglucosamine 1-carboxyvinyltransferase (419 aa).

Residue 22–23 (KN) participates in phosphoenolpyruvate binding. Arg-93 contributes to the UDP-N-acetyl-alpha-D-glucosamine binding site. Cys-117 serves as the catalytic Proton donor. Cys-117 is modified (2-(S-cysteinyl)pyruvic acid O-phosphothioketal). Asp-307 and Ile-329 together coordinate UDP-N-acetyl-alpha-D-glucosamine.

Belongs to the EPSP synthase family. MurA subfamily.

Its subcellular location is the cytoplasm. The enzyme catalyses phosphoenolpyruvate + UDP-N-acetyl-alpha-D-glucosamine = UDP-N-acetyl-3-O-(1-carboxyvinyl)-alpha-D-glucosamine + phosphate. It functions in the pathway cell wall biogenesis; peptidoglycan biosynthesis. Functionally, cell wall formation. Adds enolpyruvyl to UDP-N-acetylglucosamine. The chain is UDP-N-acetylglucosamine 1-carboxyvinyltransferase from Pseudoalteromonas atlantica (strain T6c / ATCC BAA-1087).